A 475-amino-acid polypeptide reads, in one-letter code: MSPQTETKASVGFKAGVKDYKLTYYTPDYETKDTDILAAFRVTPQPGVPPEEAGAAVAAESSTGTWTTVWTDGLTSLDRYKGRCYHIEPVAGEESQFIAYVAYPLDLFEEGSVTNMFTSIVGNVFGFKALRALRLEDLRIPPAYSKTFQGPPHGIQVERDKLNKYGRPLLGCTIKPKLGLSAKNYGRAVYECLRGGLDFTKDDENVNSQPFMRWRDRFLFCAEAIYKAQAETGEIKGHYLNATAGTCEEMIKRAVFARELGVPIVMHDYLTGGFTANTSLAHYCRDNGLLLHIHRAMHAVIDRQKNHGMHFRVLAKALRMSGGDHIHAGTVVGKLEGEREITLGFVDLLRDDYIEKDRSRGIYFTQDWVSLPGVLPVASGGIHVWHMPALTEIFGDDSVLQFGGGTLGHPWGNAPGAVANRVALEACVQARNEGRDLAREGNEIIRAAAKWSPELAAACEVWKEIKFEFPAMDTL.

A propeptide spanning residues 1 to 2 is cleaved from the precursor; that stretch reads MS. N-acetylproline is present on proline 3. Residue lysine 14 is modified to N6,N6,N6-trimethyllysine. Asparagine 123 and threonine 173 together coordinate substrate. Lysine 175 serves as the catalytic Proton acceptor. Position 177 (lysine 177) interacts with substrate. Positions 201, 203, and 204 each coordinate Mg(2+). The residue at position 201 (lysine 201) is an N6-carboxylysine. Histidine 294 acts as the Proton acceptor in catalysis. 3 residues coordinate substrate: arginine 295, histidine 327, and serine 379.

This sequence belongs to the RuBisCO large chain family. Type I subfamily. As to quaternary structure, heterohexadecamer of 8 large chains and 8 small chains; disulfide-linked. The disulfide link is formed within the large subunit homodimers. Requires Mg(2+) as cofactor. In terms of processing, the disulfide bond which can form in the large chain dimeric partners within the hexadecamer appears to be associated with oxidative stress and protein turnover.

The protein resides in the plastid. It is found in the chloroplast. The catalysed reaction is 2 (2R)-3-phosphoglycerate + 2 H(+) = D-ribulose 1,5-bisphosphate + CO2 + H2O. It catalyses the reaction D-ribulose 1,5-bisphosphate + O2 = 2-phosphoglycolate + (2R)-3-phosphoglycerate + 2 H(+). In terms of biological role, ruBisCO catalyzes two reactions: the carboxylation of D-ribulose 1,5-bisphosphate, the primary event in carbon dioxide fixation, as well as the oxidative fragmentation of the pentose substrate in the photorespiration process. Both reactions occur simultaneously and in competition at the same active site. This chain is Ribulose bisphosphate carboxylase large chain, found in Corylus cornuta (Beaked hazel).